The following is a 309-amino-acid chain: Homoserine O-succinyltransferase (309 aa).

Cysteine 142 acts as the Acyl-thioester intermediate in catalysis. Substrate-binding residues include lysine 163 and serine 192. Histidine 235 (proton acceptor) is an active-site residue. The active site involves glutamate 237. Arginine 249 contributes to the substrate binding site.

It belongs to the MetA family. As to quaternary structure, homodimer.

Its subcellular location is the cytoplasm. It carries out the reaction L-homoserine + succinyl-CoA = O-succinyl-L-homoserine + CoA. The protein operates within amino-acid biosynthesis; L-methionine biosynthesis via de novo pathway; O-succinyl-L-homoserine from L-homoserine: step 1/1. Its function is as follows. Transfers a succinyl group from succinyl-CoA to L-homoserine, forming succinyl-L-homoserine. The chain is Homoserine O-succinyltransferase from Escherichia coli (strain SE11).